Reading from the N-terminus, the 627-residue chain is Threonine--tRNA ligase (627 aa).

The catalytic stretch occupies residues 221–523; it reads DHRKLGRELG…LIEHFAGDFP (303 aa). Zn(2+) contacts are provided by Cys-319, His-370, and His-500.

The protein belongs to the class-II aminoacyl-tRNA synthetase family. In terms of assembly, homodimer. Requires Zn(2+) as cofactor.

It localises to the cytoplasm. It carries out the reaction tRNA(Thr) + L-threonine + ATP = L-threonyl-tRNA(Thr) + AMP + diphosphate + H(+). In terms of biological role, catalyzes the attachment of threonine to tRNA(Thr) in a two-step reaction: L-threonine is first activated by ATP to form Thr-AMP and then transferred to the acceptor end of tRNA(Thr). Also edits incorrectly charged L-seryl-tRNA(Thr). The protein is Threonine--tRNA ligase of Gloeobacter violaceus (strain ATCC 29082 / PCC 7421).